A 385-amino-acid chain; its full sequence is MKKTLLAAALLAGFAGAAQAETSVTLYGIIDTGIGYNDVDFKVKGANADDSDFKYNHSRFGMINGVQNGSRWGLRGTEDLGDGLQAVFQLESGFNSGNGNSAQDGRLFGRQATIGLQSESWGRLDFGRQTNIASKYFGSIDPFGAGFGQANIGMGMSAMNTVRYDNMVMYQTPSYSGFQFGIGYSFSANDKDADAVNRVGFATADNVRAITTGLRYVNGPLNVALSYDQLNASNNQAQGEVDATPRSYGLGGSYDFEVVKLALAYARTTDGWFGGQGYPVAVTLPSGDKFGGFGVNTFADGFKANSYMVGLSAPIGGASNVFGSWQMVDPKLTGGDEKMNVFSLGYTYDLSKRTNLYAYGSYAKNFAFLEDAKSTAVGVGIRHRF.

Residues 1–20 form the signal peptide; sequence MKKTLLAAALLAGFAGAAQA.

It to bacterial outer membrane proteins and porins. In terms of assembly, homotrimer.

It is found in the cell outer membrane. In terms of biological role, forms anion selective channels. The chain is Outer membrane porin protein BP0840 from Bordetella pertussis (strain Tohama I / ATCC BAA-589 / NCTC 13251).